Reading from the N-terminus, the 157-residue chain is 2-C-methyl-D-erythritol 2,4-cyclodiphosphate synthase (157 aa).

Positions 9 and 11 each coordinate a divalent metal cation. 4-CDP-2-C-methyl-D-erythritol 2-phosphate-binding positions include 9–11 (DVH) and 35–36 (HS). Histidine 43 contributes to the a divalent metal cation binding site. 4-CDP-2-C-methyl-D-erythritol 2-phosphate contacts are provided by residues 57-59 (DIG), phenylalanine 140, and arginine 143.

It belongs to the IspF family. Homotrimer. It depends on a divalent metal cation as a cofactor.

It carries out the reaction 4-CDP-2-C-methyl-D-erythritol 2-phosphate = 2-C-methyl-D-erythritol 2,4-cyclic diphosphate + CMP. It functions in the pathway isoprenoid biosynthesis; isopentenyl diphosphate biosynthesis via DXP pathway; isopentenyl diphosphate from 1-deoxy-D-xylulose 5-phosphate: step 4/6. Its function is as follows. Involved in the biosynthesis of isopentenyl diphosphate (IPP) and dimethylallyl diphosphate (DMAPP), two major building blocks of isoprenoid compounds. Catalyzes the conversion of 4-diphosphocytidyl-2-C-methyl-D-erythritol 2-phosphate (CDP-ME2P) to 2-C-methyl-D-erythritol 2,4-cyclodiphosphate (ME-CPP) with a corresponding release of cytidine 5-monophosphate (CMP). The chain is 2-C-methyl-D-erythritol 2,4-cyclodiphosphate synthase from Caldicellulosiruptor bescii (strain ATCC BAA-1888 / DSM 6725 / KCTC 15123 / Z-1320) (Anaerocellum thermophilum).